A 360-amino-acid polypeptide reads, in one-letter code: Peptide chain release factor 1 (360 aa).

Q235 is modified (N5-methylglutamine). Basic and acidic residues predominate over residues 285–308 (KRQEAEASERRNLLGSGDRSDRNR). The interval 285 to 313 (KRQEAEASERRNLLGSGDRSDRNRTYNFP) is disordered.

Belongs to the prokaryotic/mitochondrial release factor family. Post-translationally, methylated by PrmC. Methylation increases the termination efficiency of RF1.

The protein localises to the cytoplasm. Its function is as follows. Peptide chain release factor 1 directs the termination of translation in response to the peptide chain termination codons UAG and UAA. This Photorhabdus laumondii subsp. laumondii (strain DSM 15139 / CIP 105565 / TT01) (Photorhabdus luminescens subsp. laumondii) protein is Peptide chain release factor 1.